A 316-amino-acid polypeptide reads, in one-letter code: Beta-ketoacyl-[acyl-carrier-protein] synthase III 1 (316 aa).

Catalysis depends on residues cysteine 112 and histidine 243. The segment at 244 to 248 (QANYR) is ACP-binding. Residue asparagine 273 is part of the active site.

The protein belongs to the thiolase-like superfamily. FabH family. In terms of assembly, homodimer.

It localises to the cytoplasm. The enzyme catalyses malonyl-[ACP] + acetyl-CoA + H(+) = 3-oxobutanoyl-[ACP] + CO2 + CoA. Its pathway is lipid metabolism; fatty acid biosynthesis. Functionally, catalyzes the condensation reaction of fatty acid synthesis by the addition to an acyl acceptor of two carbons from malonyl-ACP. Catalyzes the first condensation reaction which initiates fatty acid synthesis and may therefore play a role in governing the total rate of fatty acid production. Possesses both acetoacetyl-ACP synthase and acetyl transacylase activities. Its substrate specificity determines the biosynthesis of branched-chain and/or straight-chain of fatty acids. This Vibrio cholerae serotype O1 (strain ATCC 39315 / El Tor Inaba N16961) protein is Beta-ketoacyl-[acyl-carrier-protein] synthase III 1.